We begin with the raw amino-acid sequence, 347 residues long: Gas vesicle ATPase GvpN (347 aa).

Residues 1 to 50 (MTNSSRERKVRGSQIRTSRREKQDKNARNRTEKELTRLENHQTHRTKNGT) form a disordered region. The span at 18–42 (SRREKQDKNARNRTEKELTRLENHQ) shows a compositional bias: basic and acidic residues. 91–98 (GPTGCGKT) contacts ATP.

The protein belongs to the CbbQ/NirQ/NorQ/GpvN family. As to quaternary structure, forms homodimers, a GvpN-GvpO heterodimer, interacts with GvpC and GvpL, might interact with GvpA.

The protein resides in the gas vesicle. Its subcellular location is the cytoplasm. It carries out the reaction ATP + H2O = ADP + phosphate + H(+). Functionally, an ATPase that functions in gas vesicle formation. A minor component of the gas vesicle, also found in soluble extracts. Gas vesicles are hollow, gas filled proteinaceous nanostructures found in some microorganisms. They allow positioning of halobacteria at the optimal depth for growth in the poorly aerated, shallow brine pools of their habitat. Its function is as follows. Expression of a 9.5 kb mc-vac DNA fragment containing 2 divergently transcribed regions (gvpD-gvpE-gvpF-gvpG-gvpH-gvpI-gvpJ-gvpK-gvpL-gvpM and gvpA-gvpC-gvpN-gvpO) allows H.volcanii to produce gas vesicles. The protein is Gas vesicle ATPase GvpN of Haloferax mediterranei (strain ATCC 33500 / DSM 1411 / JCM 8866 / NBRC 14739 / NCIMB 2177 / R-4) (Halobacterium mediterranei).